Consider the following 136-residue polypeptide: MQTTGALLISPALLRSCTRGLIRPVSASFLSRPEIPSEQPPCSSVPLQVARREFQTSVVSRDIDTAAKFIGAGAATVGVAGSGAGIGTVFGSLIIGYARNPSLKQQLFSYAILGFALFEAMGLFCLMVAFLILFAM.

Residues 1–61 (MQTTGALLIS…REFQTSVVSR (61 aa)) constitute a mitochondrion transit peptide. A helical membrane pass occupies residues 77–97 (VGVAGSGAGIGTVFGSLIIGY). Lys104 carries the post-translational modification N6,N6,N6-trimethyllysine. The chain crosses the membrane as a helical span at residues 112–132 (ILGFALFEAMGLFCLMVAFLI).

The protein belongs to the ATPase C chain family. In terms of assembly, homooctamer; the c-ring consists of eight c subunits forming a circle, and each subunit adopts a hairpin shape. Component of the ATP synthase complex composed at least of ATP5F1A/subunit alpha, ATP5F1B/subunit beta, ATP5MC1/subunit c (homooctomer), MT-ATP6/subunit a, MT-ATP8/subunit 8, ATP5ME/subunit e, ATP5MF/subunit f, ATP5MG/subunit g, ATP5MK/subunit k, ATP5MJ/subunit j, ATP5F1C/subunit gamma, ATP5F1D/subunit delta, ATP5F1E/subunit epsilon, ATP5PF/subunit F6, ATP5PB/subunit b, ATP5PD/subunit d, ATP5PO/subunit OSCP. ATP synthase complex consists of a soluble F(1) head domain (subunits alpha(3) and beta(3)) - the catalytic core - and a membrane F(0) domain - the membrane proton channel (subunits c, a, 8, e, f, g, k and j). These two domains are linked by a central stalk (subunits gamma, delta, and epsilon) rotating inside the F1 region and a stationary peripheral stalk (subunits F6, b, d, and OSCP). Interacts with TMEM70 (homooligomer form); this interaction facilitates the oligomer formation of subunit c/ATP5MC1 (c-ring) and the c-ring membrane insertion and also protects ATP5MC1 against intramitochondrial proteolysis. Post-translationally, trimethylated by ATPSCKMT at Lys-104. Methylation is required for proper incorporation of the C subunit into the ATP synthase complex and mitochondrial respiration.

Its subcellular location is the mitochondrion membrane. It carries out the reaction H(+)(in) = H(+)(out). Its function is as follows. Subunit c, of the mitochondrial membrane ATP synthase complex (F(1)F(0) ATP synthase or Complex V) that produces ATP from ADP in the presence of a proton gradient across the membrane which is generated by electron transport complexes of the respiratory chain. ATP synthase complex consist of a soluble F(1) head domain - the catalytic core - and a membrane F(1) domain - the membrane proton channel. These two domains are linked by a central stalk rotating inside the F(1) region and a stationary peripheral stalk. During catalysis, ATP synthesis in the catalytic domain of F(1) is coupled via a rotary mechanism of the central stalk subunits to proton translocation. With the subunit a (MT-ATP6), forms the proton-conducting channel in the F(0) domain, that contains two crucial half-channels (inlet and outlet) that facilitate proton movement from the mitochondrial intermembrane space (IMS) into the matrix. Protons are taken up via the inlet half-channel and released through the outlet half-channel, following a Grotthuss mechanism. This is ATP synthase F(0) complex subunit C1, mitochondrial from Sus scrofa (Pig).